Reading from the N-terminus, the 222-residue chain is Nucleoside triphosphate pyrophosphatase (222 aa).

Asp82 serves as the catalytic Proton acceptor.

Belongs to the Maf family. It depends on a divalent metal cation as a cofactor.

The protein resides in the cytoplasm. It catalyses the reaction a ribonucleoside 5'-triphosphate + H2O = a ribonucleoside 5'-phosphate + diphosphate + H(+). The catalysed reaction is a 2'-deoxyribonucleoside 5'-triphosphate + H2O = a 2'-deoxyribonucleoside 5'-phosphate + diphosphate + H(+). Functionally, nucleoside triphosphate pyrophosphatase. May have a dual role in cell division arrest and in preventing the incorporation of modified nucleotides into cellular nucleic acids. In Mycobacterium bovis (strain ATCC BAA-935 / AF2122/97), this protein is Nucleoside triphosphate pyrophosphatase.